A 434-amino-acid polypeptide reads, in one-letter code: MEKEVIVVGAGLAGSEAAYQLAKRGIKVKLYEMKAKKKTPAHSKDYFSELVCSNSLGSDSLENASGLMKEELRILGSLLIEVADKNRVPAGQALAVDRDGFSEEVTKILKNTKNIEIIEEEFTEFPNDKIVIIASGPLTSDKLFQKISEITGEESLYFYDAAAPIVTFESIDMNKAYFQSRYGKGDGEYINCPMNKEEYYNFYNELIKAERAELKNFEKEKLFDACMPIEKIAMSGEKTMTFGPLKPKGLINPKTEKMDYAVVQLRQDDKEGKLYNIVGFQTNLKFGEQKRVFSMIPGLENAEFIRYGVMHRNTFINSTKLLDKTLKLKNKDNIYFAGQITGGEGYVTAIATGMYVAMNVANRLENKEEFILEDISEIGAIVNYITEEKKKFQPMGANFGIIRSLDENIRDKKEKYRKLSERAIEYLKNSIKGV.

9–14 (GAGLAG) contacts FAD.

The protein belongs to the MnmG family. TrmFO subfamily. Requires FAD as cofactor.

The protein localises to the cytoplasm. It carries out the reaction uridine(54) in tRNA + (6R)-5,10-methylene-5,6,7,8-tetrahydrofolate + NADH + H(+) = 5-methyluridine(54) in tRNA + (6S)-5,6,7,8-tetrahydrofolate + NAD(+). It catalyses the reaction uridine(54) in tRNA + (6R)-5,10-methylene-5,6,7,8-tetrahydrofolate + NADPH + H(+) = 5-methyluridine(54) in tRNA + (6S)-5,6,7,8-tetrahydrofolate + NADP(+). Its function is as follows. Catalyzes the folate-dependent formation of 5-methyl-uridine at position 54 (M-5-U54) in all tRNAs. In Fusobacterium nucleatum subsp. nucleatum (strain ATCC 25586 / DSM 15643 / BCRC 10681 / CIP 101130 / JCM 8532 / KCTC 2640 / LMG 13131 / VPI 4355), this protein is Methylenetetrahydrofolate--tRNA-(uracil-5-)-methyltransferase TrmFO.